The following is a 192-amino-acid chain: LOB domain-containing protein 32 (192 aa).

The LOB domain occupies N4–L105.

The protein belongs to the LOB domain-containing protein family.

The sequence is that of LOB domain-containing protein 32 (LBD32) from Arabidopsis thaliana (Mouse-ear cress).